A 359-amino-acid chain; its full sequence is Alanine racemase, biosynthetic (359 aa).

Lysine 34 functions as the Proton acceptor; specific for D-alanine in the catalytic mechanism. Residue lysine 34 is modified to N6-(pyridoxal phosphate)lysine. Lysine 122 bears the N6-carboxylysine mark. Residue arginine 129 participates in substrate binding. The Proton acceptor; specific for L-alanine role is filled by tyrosine 255. Methionine 303 is a substrate binding site.

Belongs to the alanine racemase family. Homodimer. The cofactor is pyridoxal 5'-phosphate.

The catalysed reaction is L-alanine = D-alanine. It functions in the pathway amino-acid biosynthesis; D-alanine biosynthesis; D-alanine from L-alanine: step 1/1. It participates in cell wall biogenesis; peptidoglycan biosynthesis. Functionally, catalyzes the interconversion of L-alanine and D-alanine. Provides the D-alanine required for cell wall biosynthesis. This Escherichia coli (strain K12) protein is Alanine racemase, biosynthetic.